The primary structure comprises 253 residues: uncharacterized protein (253 aa).

Residues Ala-30–Ala-236 enclose the BPL/LPL catalytic domain.

This is an uncharacterized protein from Cupriavidus necator (strain ATCC 17699 / DSM 428 / KCTC 22496 / NCIMB 10442 / H16 / Stanier 337) (Ralstonia eutropha).